A 778-amino-acid polypeptide reads, in one-letter code: E3 UFM1-protein ligase 1 homolog (778 aa).

A disordered region spans residues 404–477; it reads NNLSTSHDAD…TVQQSAGNTR (74 aa). Residues 445 to 457 are compositionally biased toward basic residues; that stretch reads KSTKKHQRGRAAA.

Belongs to the UFL1 family.

Its function is as follows. E3 UFM1-protein ligase that mediates ufmylation of target proteins. The sequence is that of E3 UFM1-protein ligase 1 homolog from Drosophila virilis (Fruit fly).